Reading from the N-terminus, the 443-residue chain is Ribosomal protein uS12 methylthiotransferase RimO (443 aa).

The 111-residue stretch at 8–118 (PKVGFVSLGC…VVNAVHEVVP (111 aa)) folds into the MTTase N-terminal domain. Residues Cys-17, Cys-53, Cys-82, Cys-151, Cys-155, and Cys-158 each contribute to the [4Fe-4S] cluster site. A Radical SAM core domain is found at 137-375 (LTPRHYAYLK…MAHQQAISAA (239 aa)). Residues 378–443 (QLRIGKEIDV…DEYDMWAEPI (66 aa)) form the TRAM domain.

It belongs to the methylthiotransferase family. RimO subfamily. [4Fe-4S] cluster serves as cofactor.

It is found in the cytoplasm. It catalyses the reaction L-aspartate(89)-[ribosomal protein uS12]-hydrogen + (sulfur carrier)-SH + AH2 + 2 S-adenosyl-L-methionine = 3-methylsulfanyl-L-aspartate(89)-[ribosomal protein uS12]-hydrogen + (sulfur carrier)-H + 5'-deoxyadenosine + L-methionine + A + S-adenosyl-L-homocysteine + 2 H(+). In terms of biological role, catalyzes the methylthiolation of an aspartic acid residue of ribosomal protein uS12. This is Ribosomal protein uS12 methylthiotransferase RimO from Pseudomonas putida (strain ATCC 700007 / DSM 6899 / JCM 31910 / BCRC 17059 / LMG 24140 / F1).